The primary structure comprises 341 residues: Outer membrane protein assembly factor BamD (341 aa).

Residues 1-17 (MQVKHLLLIAILALTAA) form the signal peptide. Cys-18 is lipidated: N-palmitoyl cysteine. Cys-18 is lipidated: S-diacylglycerol cysteine. A compositionally biased stretch (basic and acidic residues) spans 289-316 (DVIKQYEDAEREIPAELKPENQDHSADD). A disordered region spans residues 289–330 (DVIKQYEDAEREIPAELKPENQDHSADDEKPESDDDEDSGRS). Residues 317 to 326 (EKPESDDDED) are compositionally biased toward acidic residues.

This sequence belongs to the BamD family. In terms of assembly, part of the Bam complex.

It is found in the cell outer membrane. Part of the outer membrane protein assembly complex, which is involved in assembly and insertion of beta-barrel proteins into the outer membrane. The sequence is that of Outer membrane protein assembly factor BamD from Pseudomonas aeruginosa (strain ATCC 15692 / DSM 22644 / CIP 104116 / JCM 14847 / LMG 12228 / 1C / PRS 101 / PAO1).